The primary structure comprises 562 residues: Potassium voltage-gated channel subfamily V member 2 (562 aa).

The segment covering 1–10 (MLKQSNERRW) has biased composition (basic and acidic residues). The disordered stretch occupies residues 1 to 34 (MLKQSNERRWSLSYKPWSTPETEDVPNTGSNQHR). Residues 1–163 (MLKQSNERRW…TDEYFFDRDP (163 aa)) are Cytoplasmic-facing. A helical transmembrane segment spans residues 164-184 (AVFQLIYNFYTSGVLLVRDEL). Over 185–269 (CPRSFLEELG…KPFSSVAAKA (85 aa)) the chain is Extracellular. A helical transmembrane segment spans residues 270-290 (MGVATNLFVLISVVALALNTV). Over 291–344 (EEMQHQAEQGTGGGDPRPILEHVEMLCVAFFTLEFLLRLASTPNLQRFARSALN) the chain is Cytoplasmic. A helical membrane pass occupies residues 345–365 (LVDLVAILPFYLQLLLECFTS). The Extracellular portion of the chain corresponds to 366–391 (EDQRHNKDSPREHDLETVGRVGKVGQ). The chain crosses the membrane as a helical; Voltage-sensor span at residues 392–412 (VLRIMRLMRIFRILKLARHST). Residues 413-427 (GLRAFGFTLRQCYQQ) lie on the Cytoplasmic side of the membrane. A helical membrane pass occupies residues 428-448 (VGCLMLFITMGIFSFSAAVYS). Residues 449–461 (VEHDVPGTNFTSI) lie on the Extracellular side of the membrane. Residue N457 is glycosylated (N-linked (GlcNAc...) asparagine). Positions 462–482 (LHAWWWAAVSISTVGYGDMYP) form an intramembrane region, pore-forming. The Selectivity filter signature appears at 474–479 (TVGYGD). The Extracellular portion of the chain corresponds to 483–488 (ETHLGR). The chain crosses the membrane as a helical span at residues 489–509 (LFAFLCIAFGIILNGMPISIL). At 510–562 (YNKFSDYYSKLKAYEYTAIRRERGKVNFMQRATKKMAECLSESHAQSTTRQEN) the chain is on the cytoplasmic side.

It belongs to the potassium channel family. V (TC 1.A.1.2) subfamily. Kv8.2/KCNV2 sub-subfamily. In terms of assembly, heteromultimer with KCNB1, KCNC1 and KCNF1. Does not form homomultimers.

The protein resides in the cell membrane. Functionally, potassium channel subunit. Modulates channel activity by shifting the threshold and the half-maximal activation to more negative values. The sequence is that of Potassium voltage-gated channel subfamily V member 2 (Kcnv2) from Mus musculus (Mouse).